The sequence spans 661 residues: B3 domain-containing protein Os12g0591400 (661 aa).

DNA-binding regions (TF-B3) lie at residues 2–95, 197–290, 437–535, and 562–658; these read GDQK…FNPS, KTRC…FNPS, LYIT…FKES, and TNLT…IRKG.

Its subcellular location is the nucleus. The sequence is that of B3 domain-containing protein Os12g0591400 from Oryza sativa subsp. japonica (Rice).